The chain runs to 443 residues: ATP-dependent protease ATPase subunit HslU (443 aa).

ATP is bound by residues Ile18 and Gly60–Glu65. The disordered stretch occupies residues Pro138–Phe158. The span at Trp143–Thr154 shows a compositional bias: basic and acidic residues. Residues Asp255, Glu321, and Arg393 each coordinate ATP.

The protein belongs to the ClpX chaperone family. HslU subfamily. In terms of assembly, a double ring-shaped homohexamer of HslV is capped on each side by a ring-shaped HslU homohexamer. The assembly of the HslU/HslV complex is dependent on binding of ATP.

It is found in the cytoplasm. Functionally, ATPase subunit of a proteasome-like degradation complex; this subunit has chaperone activity. The binding of ATP and its subsequent hydrolysis by HslU are essential for unfolding of protein substrates subsequently hydrolyzed by HslV. HslU recognizes the N-terminal part of its protein substrates and unfolds these before they are guided to HslV for hydrolysis. This is ATP-dependent protease ATPase subunit HslU from Pseudoalteromonas atlantica (strain T6c / ATCC BAA-1087).